We begin with the raw amino-acid sequence, 172 residues long: S-ribosylhomocysteine lyase (172 aa).

Fe cation is bound by residues His-54, His-58, and Cys-128.

It belongs to the LuxS family. As to quaternary structure, homodimer. Fe cation is required as a cofactor.

It catalyses the reaction S-(5-deoxy-D-ribos-5-yl)-L-homocysteine = (S)-4,5-dihydroxypentane-2,3-dione + L-homocysteine. Functionally, involved in the synthesis of autoinducer 2 (AI-2) which is secreted by bacteria and is used to communicate both the cell density and the metabolic potential of the environment. The regulation of gene expression in response to changes in cell density is called quorum sensing. Catalyzes the transformation of S-ribosylhomocysteine (RHC) to homocysteine (HC) and 4,5-dihydroxy-2,3-pentadione (DPD). This Photobacterium profundum (strain SS9) protein is S-ribosylhomocysteine lyase.